Consider the following 117-residue polypeptide: MNLLLTILFITTILSLILAIVSFWLPLMTPDYQKLSPYECGFDPLGSARLPFSIRFFLVAILFLLFDLEIALLLPLPWGDQLPSPMFTLLWASALLIMLTLGLIYEWLQGGLEWAEK.

3 helical membrane passes run 3–23 (LLLT…IVSF), 56–76 (FFLV…LLPL), and 85–105 (PMFT…GLIY).

This sequence belongs to the complex I subunit 3 family.

Its subcellular location is the mitochondrion membrane. It catalyses the reaction a ubiquinone + NADH + 5 H(+)(in) = a ubiquinol + NAD(+) + 4 H(+)(out). Core subunit of the mitochondrial membrane respiratory chain NADH dehydrogenase (Complex I) that is believed to belong to the minimal assembly required for catalysis. Complex I functions in the transfer of electrons from NADH to the respiratory chain. The immediate electron acceptor for the enzyme is believed to be ubiquinone. The chain is NADH-ubiquinone oxidoreductase chain 3 (MT-ND3) from Tetraodon nigroviridis (Spotted green pufferfish).